Here is a 190-residue protein sequence, read N- to C-terminus: Putative histone H1.6 (190 aa).

Residues 1–29 form a disordered region; it reads MSDVAVAETPAVKTPTKAPKANATKVPKV. Serine 2 carries the N-acetylserine modification. Residues 9–29 are compositionally biased toward low complexity; it reads TPAVKTPTKAPKANATKVPKV. In terms of domain architecture, H15 spans 34 to 110; that stretch reads AHPPFINMVT…GATGRFRVAE (77 aa). The segment at 141–190 is disordered; the sequence is KKTGDKVKKAKSPKKIAKPAAKKATKSPSKKVAPKKAAAKPAKKTAALKA. The span at 148–183 shows a compositional bias: basic residues; it reads KKAKSPKKIAKPAAKKATKSPSKKVAPKKAAAKPAK.

It belongs to the histone H1/H5 family.

It is found in the nucleus. Its subcellular location is the chromosome. Its function is as follows. Histones H1 are necessary for the condensation of nucleosome chains into higher-order structures. The sequence is that of Putative histone H1.6 (hil-6) from Caenorhabditis elegans.